The following is a 778-amino-acid chain: Hyperosmolality-gated Ca2+ permeable channel 1.4 (778 aa).

A run of 10 helical transmembrane segments spans residues 7–27 (IGLAAAINILSALIFLLLFAI), 101–121 (IYLIGLKIFGPIALLSWSILV), 158–178 (FWAHLVMAYAFTFWTCYVLMK), 375–395 (FVMHIAFFFLTFFFIIPIAFV), 427–447 (FLPGIVLKLFLIFLPTILMIM), 467–487 (YYIFNLVNVFLGSVITGSAFE), 512–532 (ATFFITYIMVDGWAGVAGEIF), 584–604 (PVTPVLLPFIIFFFGFAYLVF), 626–646 (VHGRIISALIISQILLLGLMS), and 651–671 (VQSTPFLLVLAILTFGFHRFC). A disordered region spans residues 738–778 (VVQTKRQRSRRTTVASSNASRGSSQSTPFNQLDLGKGKPET). Residues 753-763 (SSNASRGSSQS) are compositionally biased toward low complexity.

It belongs to the CSC1 (TC 1.A.17) family.

Its subcellular location is the membrane. Acts as an osmosensitive calcium-permeable cation channel. The chain is Hyperosmolality-gated Ca2+ permeable channel 1.4 from Arabidopsis thaliana (Mouse-ear cress).